A 95-amino-acid polypeptide reads, in one-letter code: MGRSRKKGPYVDRKLLEKIRKLNETGEKKVIKTWSRASMIIPEMVGHTIAVYNGMKHIPVYITENMIGHRLGEFAPTRRFGGHADKKAKKGELKK.

A disordered region spans residues 76 to 95 (PTRRFGGHADKKAKKGELKK). The span at 82–95 (GHADKKAKKGELKK) shows a compositional bias: basic and acidic residues.

This sequence belongs to the universal ribosomal protein uS19 family.

Protein S19 forms a complex with S13 that binds strongly to the 16S ribosomal RNA. The chain is Small ribosomal subunit protein uS19 (rpsS) from Thermotoga maritima (strain ATCC 43589 / DSM 3109 / JCM 10099 / NBRC 100826 / MSB8).